The primary structure comprises 37 residues: MIEVSLFGIVLGLIPITLAGLFVTAYLQYRRGDQLDF.

Residues 5 to 25 (SLFGIVLGLIPITLAGLFVTA) form a helical membrane-spanning segment.

This sequence belongs to the PetG family. The 4 large subunits of the cytochrome b6-f complex are cytochrome b6, subunit IV (17 kDa polypeptide, PetD), cytochrome f and the Rieske protein, while the 4 small subunits are PetG, PetL, PetM and PetN. The complex functions as a dimer.

Its subcellular location is the plastid. The protein resides in the chloroplast thylakoid membrane. Component of the cytochrome b6-f complex, which mediates electron transfer between photosystem II (PSII) and photosystem I (PSI), cyclic electron flow around PSI, and state transitions. PetG is required for either the stability or assembly of the cytochrome b6-f complex. The polypeptide is Cytochrome b6-f complex subunit 5 (Arabis hirsuta (Hairy rock-cress)).